We begin with the raw amino-acid sequence, 125 residues long: MDPKNLTVEQLAAELTKLQMENSHLKRKLRRSVGGPPKEPPKPRELTEPERQLVLARWHNRFSSRSSELLRRQLDKLTATLVTEEDIDEVLKNADFRLHFRPDPSENPEKKLSKEKRRTARGQQQ.

Residues 5–33 (NLTVEQLAAELTKLQMENSHLKRKLRRSV) are a coiled coil. Disordered regions lie at residues 22–50 (NSHL…TEPE) and 96–125 (FRLH…GQQQ). 2 stretches are compositionally biased toward basic and acidic residues: residues 39 to 50 (EPPKPRELTEPE) and 96 to 112 (FRLH…EKKL). Residues 113–125 (SKEKRRTARGQQQ) are compositionally biased toward basic residues.

This sequence belongs to the herpesviridae BLRF2 family.

This is an uncharacterized protein from Connochaetes taurinus (Blue wildebeest).